A 309-amino-acid chain; its full sequence is MAILVIAEHNNAALAAATLNTVAAAKAIGGDIHVLVAGQNVAAVAEAAAKVEGVSKVLVADNAAYAHQLPENVAPLIAELGKNYSHVLAPATTNGKNFLPRVAALLDVDQISEIVEVVSPDTFKRPIYAGNAIATVQSSAAVKVITVRTTGFDAVAAEGGSAAVEQVSGPADAGKSAFVGEELAKSDRPELTAAKIVVSGGRGMQNGDNFKILYALADKLGAAVGASRAAVDAGFVPNDMQVGQTGKIVAPQLYIAVGISGAIQHLAGMKDSKVIVAINKDEEAPIFQVADYGLVADLFDAVPELEKAV.

253–281 (LYIAVGISGAIQHLAGMKDSKVIVAINKD) contributes to the FAD binding site.

The protein belongs to the ETF alpha-subunit/FixB family. As to quaternary structure, heterodimer of an alpha and a beta subunit. FAD is required as a cofactor.

Its function is as follows. The electron transfer flavoprotein serves as a specific electron acceptor for other dehydrogenases. It transfers the electrons to the main respiratory chain via ETF-ubiquinone oxidoreductase (ETF dehydrogenase). The protein is Electron transfer flavoprotein subunit alpha (etfA) of Pseudomonas aeruginosa (strain ATCC 15692 / DSM 22644 / CIP 104116 / JCM 14847 / LMG 12228 / 1C / PRS 101 / PAO1).